The following is a 258-amino-acid chain: Alcohol dehydrogenase 2 (258 aa).

An NAD(+)-binding site is contributed by 9-33 (IFVGGLGFIGYEACKQLMAKNMASF). Residue serine 137 participates in substrate binding. Tyrosine 150 functions as the Proton acceptor in the catalytic mechanism.

This sequence belongs to the short-chain dehydrogenases/reductases (SDR) family. Homodimer.

The catalysed reaction is a primary alcohol + NAD(+) = an aldehyde + NADH + H(+). The enzyme catalyses a secondary alcohol + NAD(+) = a ketone + NADH + H(+). The sequence is that of Alcohol dehydrogenase 2 (ADH2) from Ceratitis capitata (Mediterranean fruit fly).